Reading from the N-terminus, the 522-residue chain is Putative E3 ubiquitin-protein ligase RING1a (522 aa).

Residues 1 to 10 (MSVKNNSFSS) are compositionally biased toward polar residues. Positions 1 to 119 (MSVKNNSFSS…RSPSSISGDQ (119 aa)) are disordered. The segment covering 32–64 (LQEKDETKEEKEGDEEVKHDEAEEDQEVVKPND) has biased composition (basic and acidic residues). Over residues 65–106 (AEEDDDGDDAEEDEEEEVEAEEDEEAEEEEEEEEEEEEEEED) the composition is skewed to acidic residues. The segment at 136-176 (CPICLGIIKKTRTVMECLHRFCRECIDKSMRLGNNECPACR) adopts an RING-type zinc-finger fold. Disordered regions lie at residues 250 to 347 (VLMR…DTKG) and 363 to 385 (RGGT…KSVR). Over residues 287–306 (NNNRGRDKDSSSDERGTEVR) the composition is skewed to basic and acidic residues. Positions 316 to 325 (SRSTQHPSSS) are enriched in low complexity. Composition is skewed to polar residues over residues 326–336 (GANKNNGNCAD) and 366–384 (TRSN…SKSV).

Homodimer or heterodimer with RING1B. Interacts with CLF. Component of the PRC1-like complex, at least composed of RING1A, RING1B and LHP1.

The protein resides in the nucleus. It catalyses the reaction S-ubiquitinyl-[E2 ubiquitin-conjugating enzyme]-L-cysteine + [acceptor protein]-L-lysine = [E2 ubiquitin-conjugating enzyme]-L-cysteine + N(6)-ubiquitinyl-[acceptor protein]-L-lysine.. It functions in the pathway protein modification; protein ubiquitination. In terms of biological role, putative E3 ubiquitin-protein ligase that mediates monoubiquitination of 'Lys-119' of histone H2A (H2AK119ub), thereby playing a central role in histone code and gene regulation. As part of the PRC1-like complex, repress class I KNOX gene expression. PcG PRC1 complex maintains the transcriptionally repressive state of many genes, including Hox genes, throughout development. PcG PRC1 complex acts via chromatin remodeling and modification of histones, rendering chromatin heritably changed in its expressibility. The protein is Putative E3 ubiquitin-protein ligase RING1a (RING1A) of Arabidopsis thaliana (Mouse-ear cress).